The sequence spans 376 residues: Putative 12-oxophytodienoate reductase 2 (376 aa).

FMN is bound by residues 31-33 (PLT), Ala64, and Gln106. 178–181 (HGAH) provides a ligand contact to substrate. Tyr183 (proton donor) is an active-site residue. FMN is bound by residues Arg230, Gly301, and 322 to 323 (GR).

Belongs to the NADH:flavin oxidoreductase/NADH oxidase family. FMN serves as cofactor.

Functionally, putative oxophytodienoate reductase that may be involved in the biosynthesis or metabolism of oxylipin signaling molecules. In Oryza sativa subsp. japonica (Rice), this protein is Putative 12-oxophytodienoate reductase 2 (OPR2).